A 344-amino-acid chain; its full sequence is Succinylglutamate desuccinylase (344 aa).

The Zn(2+) site is built by His-63, Glu-66, and His-160. Glu-224 is a catalytic residue.

The protein belongs to the AspA/AstE family. Succinylglutamate desuccinylase subfamily. The cofactor is Zn(2+).

The catalysed reaction is N-succinyl-L-glutamate + H2O = L-glutamate + succinate. It functions in the pathway amino-acid degradation; L-arginine degradation via AST pathway; L-glutamate and succinate from L-arginine: step 5/5. Transforms N(2)-succinylglutamate into succinate and glutamate. The protein is Succinylglutamate desuccinylase of Shewanella putrefaciens (strain CN-32 / ATCC BAA-453).